A 373-amino-acid chain; its full sequence is Mating-type protein A-2 (373 aa).

The disordered stretch occupies residues 1–22; that stretch reads MNLLNMQPKRSEQPAMFEENRA.

To P.anserina SMR1.

Functionally, required, together with mating-type protein A-3, for efficient ascospore formation. The sequence is that of Mating-type protein A-2 (matA-2) from Neurospora crassa (strain ATCC 24698 / 74-OR23-1A / CBS 708.71 / DSM 1257 / FGSC 987).